The primary structure comprises 350 residues: Ferredoxin--NADP reductase (350 aa).

Residues Thr25, Glu44, Gln52, Tyr57, Val97, Phe132, Asp298, and Ser339 each contribute to the FAD site.

This sequence belongs to the ferredoxin--NADP reductase type 2 family. In terms of assembly, homodimer. Requires FAD as cofactor.

The enzyme catalyses 2 reduced [2Fe-2S]-[ferredoxin] + NADP(+) + H(+) = 2 oxidized [2Fe-2S]-[ferredoxin] + NADPH. This chain is Ferredoxin--NADP reductase, found in Chlorobium limicola (strain DSM 245 / NBRC 103803 / 6330).